A 75-amino-acid chain; its full sequence is UPF0352 protein YejL (75 aa).

This sequence belongs to the UPF0352 family.

The polypeptide is UPF0352 protein YejL (Escherichia coli O127:H6 (strain E2348/69 / EPEC)).